The following is a 438-amino-acid chain: Acid phosphatase type 7 (438 aa).

The N-terminal stretch at 1 to 23 is a signal peptide; that stretch reads MSPFLGGWLFFCMLLPFSPGVQG. Residues Asp-141, Asp-170, and Tyr-173 each coordinate Fe cation. Position 170 (Asp-170) interacts with Zn(2+). Asn-205 provides a ligand contact to Zn(2+). A glycan (N-linked (GlcNAc...) asparagine) is linked at Asn-211. Residues His-286 and His-333 each coordinate Zn(2+). His-335 serves as a coordination point for Fe cation. N-linked (GlcNAc...) asparagine glycosylation is found at Asn-350 and Asn-404.

It belongs to the metallophosphoesterase superfamily. Purple acid phosphatase family. Fe cation is required as a cofactor. Requires Zn(2+) as cofactor.

The protein localises to the secreted. It catalyses the reaction a phosphate monoester + H2O = an alcohol + phosphate. This chain is Acid phosphatase type 7, found in Mus musculus (Mouse).